Here is a 414-residue protein sequence, read N- to C-terminus: Serine/threonine transporter SstT (414 aa).

8 helical membrane-spanning segments follow: residues 16 to 36 (GSLV…AWIS), 46 to 66 (LGTL…LMLV), 84 to 104 (ILFL…VFSF), 143 to 163 (ALLN…GFAL), 180 to 200 (AVTF…FGLV), 219 to 239 (LVVL…LLVF), 300 to 320 (MAGA…TLGV), and 332 to 352 (VVAS…LLLI).

Belongs to the dicarboxylate/amino acid:cation symporter (DAACS) (TC 2.A.23) family.

It is found in the cell inner membrane. It carries out the reaction L-serine(in) + Na(+)(in) = L-serine(out) + Na(+)(out). The enzyme catalyses L-threonine(in) + Na(+)(in) = L-threonine(out) + Na(+)(out). Involved in the import of serine and threonine into the cell, with the concomitant import of sodium (symport system). The sequence is that of Serine/threonine transporter SstT from Salmonella schwarzengrund (strain CVM19633).